A 508-amino-acid polypeptide reads, in one-letter code: Chromosomal replication initiator protein DnaA (508 aa).

A domain I, interacts with DnaA modulators region spans residues 1 to 91 (MADDPGSSFT…TDALSRRLGQ (91 aa)). The segment at 91 to 167 (QQIQLGVRIA…AIDPAVAAGT (77 aa)) is domain II. The disordered stretch occupies residues 104–152 (DDVEDALIPSAEPFPDTDADLSARRRTDSRASGERGAVTNTQPGWTNYF). Basic and acidic residues predominate over residues 124-136 (LSARRRTDSRASG). Over residues 141–152 (VTNTQPGWTNYF) the composition is skewed to polar residues. The domain III, AAA+ region stretch occupies residues 168-384 (SLNRRYTFDT…GALIRVTAFA (217 aa)). ATP is bound by residues G212, G214, K215, and T216. The domain IV, binds dsDNA stretch occupies residues 385 to 508 (SLNKTPIDKS…TTRIRQRSKR (124 aa)).

This sequence belongs to the DnaA family. Oligomerizes as a right-handed, spiral filament on DNA at oriC.

The protein localises to the cytoplasm. In terms of biological role, plays an essential role in the initiation and regulation of chromosomal replication. ATP-DnaA binds to the origin of replication (oriC) to initiate formation of the DNA replication initiation complex once per cell cycle. Binds the DnaA box (a 9 base pair repeat at the origin) and separates the double-stranded (ds)DNA. Forms a right-handed helical filament on oriC DNA; dsDNA binds to the exterior of the filament while single-stranded (ss)DNA is stabiized in the filament's interior. The ATP-DnaA-oriC complex binds and stabilizes one strand of the AT-rich DNA unwinding element (DUE), permitting loading of DNA polymerase. After initiation quickly degrades to an ADP-DnaA complex that is not apt for DNA replication. Binds acidic phospholipids. The protein is Chromosomal replication initiator protein DnaA of Mycobacterium avium.